A 164-amino-acid chain; its full sequence is Transcription factor E (164 aa).

Residues 5 to 87 (NDKVIRGYLL…LWRLDFSDIE (83 aa)) form the HTH TFE/IIEalpha-type domain.

This sequence belongs to the TFE family. As to quaternary structure, monomer. Interaction with RNA polymerase subunits RpoF and RpoE is necessary for Tfe stimulatory transcription activity. Able to interact with Tbp and RNA polymerase in the absence of DNA promoter. Interacts both with the preinitiation and elongation complexes.

Transcription factor that plays a role in the activation of archaeal genes transcribed by RNA polymerase. Facilitates transcription initiation by enhancing TATA-box recognition by TATA-box-binding protein (Tbp), and transcription factor B (Tfb) and RNA polymerase recruitment. Not absolutely required for transcription in vitro, but particularly important in cases where Tbp or Tfb function is not optimal. It dynamically alters the nucleic acid-binding properties of RNA polymerases by stabilizing the initiation complex and destabilizing elongation complexes. Seems to translocate with the RNA polymerase following initiation and acts by binding to the non template strand of the transcription bubble in elongation complexes. This chain is Transcription factor E, found in Methanosarcina barkeri (strain Fusaro / DSM 804).